A 306-amino-acid polypeptide reads, in one-letter code: Ribonuclease Z (306 aa).

7 residues coordinate Zn(2+): His63, His65, Asp67, His68, His141, Asp208, and His266. Asp67 functions as the Proton acceptor in the catalytic mechanism.

The protein belongs to the RNase Z family. As to quaternary structure, homodimer. The cofactor is Zn(2+).

It carries out the reaction Endonucleolytic cleavage of RNA, removing extra 3' nucleotides from tRNA precursor, generating 3' termini of tRNAs. A 3'-hydroxy group is left at the tRNA terminus and a 5'-phosphoryl group is left at the trailer molecule.. Functionally, zinc phosphodiesterase, which displays some tRNA 3'-processing endonuclease activity. Probably involved in tRNA maturation, by removing a 3'-trailer from precursor tRNA. This chain is Ribonuclease Z, found in Chlamydia caviae (strain ATCC VR-813 / DSM 19441 / 03DC25 / GPIC) (Chlamydophila caviae).